A 254-amino-acid chain; its full sequence is Vesicle transport protein USE1 (254 aa).

Residues 1–228 (MAYISENELK…AYKCGYDCFK (228 aa)) lie on the Cytoplasmic side of the membrane. A helical; Anchor for type IV membrane protein membrane pass occupies residues 229 to 249 (VMLIVLIFMSFVSMVLMMKIF). Over 250 to 254 (KKAST) the chain is Lumenal.

This sequence belongs to the USE1 family.

It localises to the endoplasmic reticulum membrane. SNARE that may be involved in targeting and fusion of Golgi-derived retrograde transport vesicles with the ER. The polypeptide is Vesicle transport protein USE1 (Caenorhabditis elegans).